Consider the following 330-residue polypeptide: Probable cytosolic iron-sulfur protein assembly protein 1 (330 aa).

7 WD repeats span residues 12-49 (LYKE…FTLI), 56-95 (AHKK…DRTF), 105-144 (GHEN…EEYE), 151-190 (EHSQ…WECV), 195-236 (GHEG…EDDQ), 248-286 (VHKR…WKVF), and 292-330 (CHGV…EKAA).

This sequence belongs to the WD repeat CIA1 family. Interacts with NAR1.

The protein localises to the cytoplasm. It localises to the nucleus. Its function is as follows. Essential component of the cytosolic iron-sulfur (Fe/S) protein assembly machinery. Required for the maturation of extramitochondrial Fe/S proteins. This chain is Probable cytosolic iron-sulfur protein assembly protein 1, found in Saccharomyces cerevisiae (strain YJM789) (Baker's yeast).